A 281-amino-acid chain; its full sequence is Stomatin-4 (281 aa).

Residues 28 to 48 (WIITIISYLVVLFTLPLSAFF) form a helical membrane-spanning segment.

Belongs to the band 7/mec-2 family.

It localises to the membrane. The sequence is that of Stomatin-4 (sto-4) from Caenorhabditis elegans.